Here is a 424-residue protein sequence, read N- to C-terminus: UPF0053 protein MG146 (424 aa).

Residues 6–191 enclose the CNNM transmembrane domain; the sequence is SGLTLTVIIL…EQNGLFSKED (186 aa). 4 consecutive transmembrane segments (helical) span residues 7–27, 71–91, 101–121, and 135–155; these read GLTL…STVV, LITI…ILFL, LLSS…FCEI, and LVLF…ITKL. CBS domains follow at residues 210–270 and 272–332; these read MIKW…PKSL and LNQL…IYDE.

The protein belongs to the UPF0053 family.

Its subcellular location is the cell membrane. This is UPF0053 protein MG146 from Mycoplasma genitalium (strain ATCC 33530 / DSM 19775 / NCTC 10195 / G37) (Mycoplasmoides genitalium).